The chain runs to 1082 residues: CRISPR-associated endonuclease Cas9 (1082 aa).

The For RuvC-like nuclease domain role is filled by Asp-16. Residues Asp-16, Glu-504, and Glu-508 each coordinate Mg(2+). One can recognise an HNH Cas9-type domain in the interval 512–667 (SFKDRKEIEK…DEDGFKERNL (156 aa)). His-588 functions as the Proton acceptor for HNH nuclease domain in the catalytic mechanism. Residue His-723 participates in Mg(2+) binding.

Belongs to the CRISPR-associated protein Cas9 family. Subtype II-C subfamily. As to quaternary structure, monomer. Binds crRNA and tracrRNA. Requires Mg(2+) as cofactor.

Its function is as follows. CRISPR (clustered regularly interspaced short palindromic repeat) is an adaptive immune system that provides protection against mobile genetic elements (viruses, transposable elements and conjugative plasmids). CRISPR clusters contain spacers, sequences complementary to antecedent mobile elements, and target invading nucleic acids. CRISPR clusters are transcribed and processed into CRISPR RNA (crRNA). In type II CRISPR systems correct processing of pre-crRNA requires a trans-encoded small RNA (tracrRNA), endogenous ribonuclease 3 (rnc) and this protein. The tracrRNA serves as a guide for ribonuclease 3-aided processing of pre-crRNA. Subsequently Cas9/crRNA/tracrRNA endonucleolytically cleaves linear or circular dsDNA target complementary to the spacer; Cas9 is inactive in the absence of the 2 guide RNAs (gRNA). Cas9 recognizes the protospacer adjacent motif (PAM) in the CRISPR repeat sequences to help distinguish self versus nonself, as targets within the bacterial CRISPR locus do not have PAMs. PAM recognition is also required for catalytic activity. Cuts target DNA in Cas9:gRNAs mixing experiments with C.jejuni strain NCTC 11168 and P.multocoda strain Pm70. This Neisseria meningitidis serogroup A / serotype 4A (strain DSM 15465 / Z2491) protein is CRISPR-associated endonuclease Cas9.